We begin with the raw amino-acid sequence, 221 residues long: Putative 3-methyladenine DNA glycosylase (221 aa).

Belongs to the DNA glycosylase MPG family.

The polypeptide is Putative 3-methyladenine DNA glycosylase (Herpetosiphon aurantiacus (strain ATCC 23779 / DSM 785 / 114-95)).